A 565-amino-acid chain; its full sequence is Glycine--tRNA ligase (565 aa).

Substrate-binding residues include Arg-98 and Glu-164. ATP is bound by residues 196–198 (RNE), 206–211 (IRLREF), 323–324 (EI), and 440–443 (GIDR). Position 211 to 215 (211 to 215 (FTQAE)) interacts with substrate. Residue 436–440 (EPSFG) participates in substrate binding.

It belongs to the class-II aminoacyl-tRNA synthetase family.

It localises to the cytoplasm. The enzyme catalyses tRNA(Gly) + glycine + ATP = glycyl-tRNA(Gly) + AMP + diphosphate. In terms of biological role, catalyzes the attachment of glycine to tRNA(Gly). In Methanothermobacter thermautotrophicus (strain ATCC 29096 / DSM 1053 / JCM 10044 / NBRC 100330 / Delta H) (Methanobacterium thermoautotrophicum), this protein is Glycine--tRNA ligase.